The following is a 359-amino-acid chain: Fc receptor-like A (359 aa).

Positions 1–27 (MKLGCVLMAWALYLSLGVLWVAQMLLA) are cleaved as a signal peptide. 2 consecutive Ig-like C2-type domains span residues 70–159 (PFHL…ETAS) and 170–257 (PAPI…PQLE). Disulfide bonds link Cys99–Cys143 and Cys192–Cys240. Residues 259–313 (RVQGASSSAAPPTLNPAPQKSAAPGTAPEEAPGPLPPPPTPSSEDPGFSSPLGMP) form a disordered region. Low complexity predominate over residues 279–288 (SAAPGTAPEE). The segment covering 289 to 299 (APGPLPPPPTP) has biased composition (pro residues).

As to quaternary structure, monomer or homodimer; disulfide-linked. Expressed specifically in primary and secondary lymphoid tissues like lymph node, spleen and tonsil. Specifically expressed in B-cells with a high level in normal germinal center B-cells, centroblasts and in a subset of diffuse large B-cell lymphomas. Highly expressed in bone marrow B-cells and weakly in earlier B lineage cells. Expressed in pre-germinal and germinal center B-cells in secondary lymphoid tissues. Also expressed in melanoma and melanocytes.

The protein resides in the cytoplasm. Its function is as follows. May be implicated in B-cell differentiation and lymphomagenesis. This Homo sapiens (Human) protein is Fc receptor-like A (FCRLA).